Consider the following 406-residue polypeptide: S-adenosylmethionine synthase (406 aa).

ATP is bound at residue His17. A Mg(2+)-binding site is contributed by Asp19. Glu45 contributes to the K(+) binding site. Residues Glu58 and Gln101 each coordinate L-methionine. A flexible loop region spans residues 101-111 (QSAEINQGVAR). ATP contacts are provided by residues 178 to 180 (DGK), Asp258, 264 to 265 (RK), Ala281, and Lys285. Asp258 is an L-methionine binding site. Lys289 lines the L-methionine pocket.

It belongs to the AdoMet synthase family. As to quaternary structure, homotetramer; dimer of dimers. The cofactor is Mg(2+). K(+) is required as a cofactor.

Its subcellular location is the cytoplasm. It carries out the reaction L-methionine + ATP + H2O = S-adenosyl-L-methionine + phosphate + diphosphate. Its pathway is amino-acid biosynthesis; S-adenosyl-L-methionine biosynthesis; S-adenosyl-L-methionine from L-methionine: step 1/1. Catalyzes the formation of S-adenosylmethionine (AdoMet) from methionine and ATP. The overall synthetic reaction is composed of two sequential steps, AdoMet formation and the subsequent tripolyphosphate hydrolysis which occurs prior to release of AdoMet from the enzyme. This is S-adenosylmethionine synthase from Bifidobacterium longum subsp. infantis (strain ATCC 15697 / DSM 20088 / JCM 1222 / NCTC 11817 / S12).